We begin with the raw amino-acid sequence, 332 residues long: Ferredoxin--NADP reductase (332 aa).

Residues threonine 20, glutamate 39, glutamine 47, tyrosine 52, valine 92, phenylalanine 126, aspartate 288, and serine 329 each contribute to the FAD site.

This sequence belongs to the ferredoxin--NADP reductase type 2 family. In terms of assembly, homodimer. FAD serves as cofactor.

The catalysed reaction is 2 reduced [2Fe-2S]-[ferredoxin] + NADP(+) + H(+) = 2 oxidized [2Fe-2S]-[ferredoxin] + NADPH. The polypeptide is Ferredoxin--NADP reductase (Geobacillus thermodenitrificans (strain NG80-2)).